The primary structure comprises 228 residues: MKRYMFGTLPRVQPKRCFQTAIGKESPKGNSEKDQLFENPFFQQLPSNVAAVYLNPVKFNPSENDVLCASLKIKSFETPKLDTFTDFICRTAYYMKIPIKGPRPLPNKVESWTLLRSPFIHKSSQENFERITHSRLIQLYSVNPVTLETFFSYLRKCNMWDLKLQAKAYEYESIDDALKNFESQSKSTDNFKELLNGPSKKDIITQNAEKLLRNDPIYKDLLKNSSRK.

Residues 1 to 17 constitute a mitochondrion transit peptide; the sequence is MKRYMFGTLPRVQPKRC.

It belongs to the universal ribosomal protein uS10 family. Component of the mitochondrial small ribosomal subunit (mt-SSU). Mature yeast 74S mitochondrial ribosomes consist of a small (37S) and a large (54S) subunit. The 37S small subunit contains a 15S ribosomal RNA (15S mt-rRNA) and at least 32 different proteins. The 54S large subunit contains a 21S rRNA (21S mt-rRNA) and at least 45 different proteins.

It is found in the mitochondrion. Functionally, component of the mitochondrial ribosome (mitoribosome), a dedicated translation machinery responsible for the synthesis of mitochondrial genome-encoded proteins, including at least some of the essential transmembrane subunits of the mitochondrial respiratory chain. The mitoribosomes are attached to the mitochondrial inner membrane and translation products are cotranslationally integrated into the membrane. The chain is Small ribosomal subunit protein uS10m (rsm10) from Schizosaccharomyces pombe (strain 972 / ATCC 24843) (Fission yeast).